The chain runs to 488 residues: Inosine-5'-monophosphate dehydrogenase (488 aa).

CBS domains are found at residues 95 to 153 and 157 to 216; these read VISN…SIKI and MTQE…AKDE. NAD(+) is bound by residues Asp250 and 300 to 302; that span reads GIG. Gly302 and Gly304 together coordinate K(+). Ser305 is a binding site for IMP. Cys307 serves as a coordination point for K(+). Cys307 serves as the catalytic Thioimidate intermediate. Residues 340-342, 363-364, and 387-391 contribute to the IMP site; these read DGG, GS, and YRGMG. The active-site Proton acceptor is Arg403. IMP is bound at residue Glu417. The tract at residues 468-488 is disordered; sequence GLAESHPHNIQITKESPNYSF. 3 residues coordinate K(+): Glu471, Ser472, and His473. Positions 475-488 are enriched in polar residues; it reads HNIQITKESPNYSF.

Belongs to the IMPDH/GMPR family. As to quaternary structure, homotetramer. It depends on K(+) as a cofactor.

The enzyme catalyses IMP + NAD(+) + H2O = XMP + NADH + H(+). It participates in purine metabolism; XMP biosynthesis via de novo pathway; XMP from IMP: step 1/1. Mycophenolic acid (MPA) is a non-competitive inhibitor that prevents formation of the closed enzyme conformation by binding to the same site as the amobile flap. In contrast, mizoribine monophosphate (MZP) is a competitive inhibitor that induces the closed conformation. MPA is a potent inhibitor of mammalian IMPDHs but a poor inhibitor of the bacterial enzymes. MZP is a more potent inhibitor of bacterial IMPDH. Functionally, catalyzes the conversion of inosine 5'-phosphate (IMP) to xanthosine 5'-phosphate (XMP), the first committed and rate-limiting step in the de novo synthesis of guanine nucleotides, and therefore plays an important role in the regulation of cell growth. The sequence is that of Inosine-5'-monophosphate dehydrogenase from Staphylococcus aureus (strain Mu50 / ATCC 700699).